Reading from the N-terminus, the 1044-residue chain is Diacylglycerol lipase-alpha (1044 aa).

The Cytoplasmic segment spans residues 1–22 (MPGIVVFRRRWSVGSDDLVLPA). A helical membrane pass occupies residues 23 to 43 (IFLFLLHTTWFVILSVVLFGL). The Extracellular portion of the chain corresponds to 44 to 60 (VYNPHEACSLNLVDHGR). The chain crosses the membrane as a helical span at residues 61–81 (GYLGILLSCMIAEMAIIWLSM). At 82–101 (RGGILYTEPRDSMQYVLYVR) the chain is on the cytoplasmic side. Residues 102 to 122 (LAILVIEFIYAIVGIVWLTQY) form a helical membrane-spanning segment. Residues 123–136 (YTSCNDLTAKNVTL) lie on the Extracellular side of the membrane. An N-linked (GlcNAc...) asparagine glycan is attached at Asn-133. A helical membrane pass occupies residues 137 to 157 (GMVVCNWVVILSVCITVLCVF). Topologically, residues 158-1044 (DPTGRTFVKL…KQDDLVISAR (887 aa)) are cytoplasmic. Catalysis depends on charge relay system residues Ser-472 and Asp-524. Residues Ser-728, Ser-730, Ser-733, Ser-744, Ser-784, Ser-786, Ser-808, Ser-810, Ser-835, Ser-849, and Ser-954 each carry the phosphoserine modification. A disordered region spans residues 848–897 (LSKHSQDTQPLEAALGSGGVTPERPPSATIEEEEAAGGSEGGGVAPRGEL). Residues 1013 to 1044 (QECLATDKIRTSTPTGHGASPTKQDDLVISAR) form a disordered region. Position 1025 is a phosphothreonine (Thr-1025).

Belongs to the AB hydrolase superfamily. Lipase family. In terms of assembly, interacts (via C-terminal) with CAMK2A; leading to the phosphorylation and inhibition of DAGLA enzymatic activity. Interacts (via PPXXF motif) with HOMER1 and HOMER2; this interaction is required for DAGLA membrane localization. Ca(2+) serves as cofactor. In terms of processing, phosphorylated at Ser-784 and Ser-810 by CAMK2A; phosphorylation by CAMK2A inhibits diacylglycerol lipase activity. In terms of tissue distribution, highly expressed by principal cells in the hippocampus. In embryonic brains, it is present in axonal tracts, while in adults it localizes to dendritic fields, correlating with the developmental change in requirement for 2-AG synthesis from the pre- to the postsynaptic compartment. Concentrated in heads of dendritic spines throughout the hippocampal formation. Highly compartmentalized into a wide perisynaptic annulus around the postsynaptic density of axospinous contacts but not intrasynaptically (at protein level).

Its subcellular location is the cell membrane. It is found in the cell projection. It localises to the dendritic spine membrane. The protein localises to the postsynaptic density membrane. The protein resides in the early endosome membrane. The catalysed reaction is a 1,2-diacyl-sn-glycerol + H2O = a 2-acylglycerol + a fatty acid + H(+). The enzyme catalyses 1-octadecanoyl-2-(5Z,8Z,11Z,14Z-eicosatetraenoyl)-sn-glycerol + H2O = 2-(5Z,8Z,11Z,14Z-eicosatetraenoyl)-glycerol + octadecanoate + H(+). It catalyses the reaction 1,2-di-(9Z-octadecenoyl)-sn-glycerol + H2O = 2-(9Z-octadecenoyl)-glycerol + (9Z)-octadecenoate + H(+). It carries out the reaction 1-(9Z-octadecenoyl)-2-(5Z,8Z,11Z,14Z-eicosatetraenoyl)-sn-glycerol + H2O = 2-(5Z,8Z,11Z,14Z-eicosatetraenoyl)-glycerol + (9Z)-octadecenoate + H(+). The catalysed reaction is 1-(9Z-octadecenoyl)-2-octadecanoyl-sn-glycerol + H2O = 2-octadecanoylglycerol + (9Z)-octadecenoate + H(+). The enzyme catalyses 1-(9Z-octadecenoyl)-2-(9Z,12Z-octadecadienoyl)-sn-glycerol + H2O = 2-(9Z,12Z-octadecadienoyl)-glycerol + (9Z)-octadecenoate + H(+). It catalyses the reaction 1-(9Z-octadecenoyl)-2-O-(5Z,8Z,11Z,14Z-eicosatetraenyl)-sn-glycerol + H2O = 2-O-(5Z,8Z,11Z,14Z)-eicosatetraenylglycerol + (9Z)-octadecenoate + H(+). Its activity is regulated as follows. Inhibited by 1,2,3-triazole urea covalent inhibitor KT172, DH376 and DO34. Inhibited by p-hydroxy-mercuri-benzoate and HgCl(2), but not to PMSF. Also inhibited by RHC80267. Diacylglycerol lipase activity is inhibited by the phosphorylation of Ser-784 and Ser-810 by CAMK2A. In terms of biological role, serine hydrolase that hydrolyzes arachidonic acid-esterified diacylglycerols (DAGs) to produce the principal endocannabinoid (eCB), 2-arachidonoylglycerol (2-AG). Preferentially hydrolyzes sn-1 fatty acids from diacylglycerols (DAG) that contain arachidonic acid (AA) esterified at the sn-2 position to biosynthesize 2-AG. Has negligible activity against other lipids including monoacylglycerols and phospholipids. Plays a key role in regulating 2-AG signaling in the central nervous system (CNS). Controls the activity of 2-AG as a retrograde messenger at neuronal synapses. Supports axonal growth during development and adult neurogenesis. Plays a role for eCB signaling in the physiological regulation of anxiety and depressive behaviors. Also regulates neuroinflammatory responses in the brain, in particular, LPS-induced microglial activation. The protein is Diacylglycerol lipase-alpha (Dagla) of Mus musculus (Mouse).